We begin with the raw amino-acid sequence, 652 residues long: DNA ligase (652 aa).

Residues 29–33, 78–79, and Glu107 each bind NAD(+); these read DSDYD and SL. Residue Lys109 is the N6-AMP-lysine intermediate of the active site. Positions 130, 164, 278, and 302 each coordinate NAD(+). Zn(2+)-binding residues include Cys395, Cys398, Cys413, and Cys418. A BRCT domain is found at 577–652; the sequence is NSDAALFGLT…IEDEDWLRQL (76 aa).

Belongs to the NAD-dependent DNA ligase family. LigA subfamily. The cofactor is Mg(2+). It depends on Mn(2+) as a cofactor.

The catalysed reaction is NAD(+) + (deoxyribonucleotide)n-3'-hydroxyl + 5'-phospho-(deoxyribonucleotide)m = (deoxyribonucleotide)n+m + AMP + beta-nicotinamide D-nucleotide.. Functionally, DNA ligase that catalyzes the formation of phosphodiester linkages between 5'-phosphoryl and 3'-hydroxyl groups in double-stranded DNA using NAD as a coenzyme and as the energy source for the reaction. It is essential for DNA replication and repair of damaged DNA. In Streptococcus pyogenes serotype M1, this protein is DNA ligase.